Here is a 361-residue protein sequence, read N- to C-terminus: AP2/ERF and B3 domain-containing transcription repressor TEM1 (361 aa).

The disordered stretch occupies residues 1–73 (MEYSCVDDSS…SRKLPSSKYK (73 aa)). A compositionally biased stretch (low complexity) spans 9 to 27 (SSTTSESLSISTTPKPTTT). The segment at residues 71 to 126 (KYKGVVPQPNGRWGAQIYEKHQRVWLGTFNEEEEAASSYDIAVRRFRGRDAVTNFK) is a DNA-binding region (AP2/ERF). A DNA-binding region (TF-B3) is located at residues 195–306 (FEKTVTPSDV…QLYIHWKVRS (112 aa)).

It belongs to the AP2/ERF transcription factor family. RAV subfamily. As to quaternary structure, interacts with FT. In terms of tissue distribution, expressed in leaves.

The protein localises to the nucleus. Transcriptional repressor of flowering time on long day plants. Acts directly on FT expression by binding 5'-CAACA-3' and 5'-CACCTG-3 sequences. Functionally redundant with TEM2. In Arabidopsis thaliana (Mouse-ear cress), this protein is AP2/ERF and B3 domain-containing transcription repressor TEM1 (TEM1).